A 390-amino-acid chain; its full sequence is Pepsin B (390 aa).

The signal sequence occupies residues 1-16 (MKIQVLVLVCLHLSEG). Residues 17–59 (VERIILKKGKSIRQVMEERGVLETFLRNHPKVDPAAKYLFNND) constitute a propeptide, activation peptide. Positions 74–387 (YFGEISIGTP…DMAANRVGFA (314 aa)) constitute a Peptidase A1 domain. The active site involves D92. 2 disulfides stabilise this stretch: C105–C110 and C269–C273. The active site involves D278. C312 and C345 are oxidised to a cystine.

Belongs to the peptidase A1 family.

The protein localises to the secreted. It catalyses the reaction Degradation of gelatin, little activity on hemoglobin. Specificity on B chain of insulin more restricted than that of pepsin A. Does not cleave 1-Phe-|-Val-2, 4-Gln-|-His-5 or 23-Gly-|-Phe-24.. In terms of biological role, hydrolyzes various peptides including beta-endorphin, insulin B chain, dynorphin A, and neurokinin A, with high specificity for the cleavage of the Phe-Xaa bonds. The protein is Pepsin B (PGB) of Canis lupus familiaris (Dog).